The primary structure comprises 192 residues: uncharacterized protein (192 aa).

The next 2 helical transmembrane spans lie at 31 to 51 (IVET…YVYE) and 119 to 139 (VPGA…LWEI).

It is found in the cell membrane. This is an uncharacterized protein from Thermotoga maritima (strain ATCC 43589 / DSM 3109 / JCM 10099 / NBRC 100826 / MSB8).